Reading from the N-terminus, the 231-residue chain is Probable septum site-determining protein MinC (231 aa).

The protein belongs to the MinC family. In terms of assembly, interacts with MinD and FtsZ.

Its function is as follows. Cell division inhibitor that blocks the formation of polar Z ring septums. Rapidly oscillates between the poles of the cell to destabilize FtsZ filaments that have formed before they mature into polar Z rings. Prevents FtsZ polymerization. In Baumannia cicadellinicola subsp. Homalodisca coagulata, this protein is Probable septum site-determining protein MinC.